Consider the following 434-residue polypeptide: Eukaryotic translation initiation factor 3 subunit E (434 aa).

A PCI domain is found at F219–L392.

It belongs to the eIF-3 subunit E family. In terms of assembly, component of the eukaryotic translation initiation factor 3 (eIF-3) complex. The eIF-3 complex interacts with pix. Interacts with mxt.

Its subcellular location is the cytoplasm. In terms of biological role, component of the eukaryotic translation initiation factor 3 (eIF-3) complex, which is involved in protein synthesis of a specialized repertoire of mRNAs and, together with other initiation factors, stimulates binding of mRNA and methionyl-tRNAi to the 40S ribosome. The eIF-3 complex specifically targets and initiates translation of a subset of mRNAs involved in cell proliferation. This chain is Eukaryotic translation initiation factor 3 subunit E (eIF3-S6), found in Drosophila ananassae (Fruit fly).